The chain runs to 95 residues: Small ribosomal subunit protein uS19 (95 aa).

The protein belongs to the universal ribosomal protein uS19 family.

Protein S19 forms a complex with S13 that binds strongly to the 16S ribosomal RNA. In Myxococcus xanthus (strain DK1622), this protein is Small ribosomal subunit protein uS19.